A 513-amino-acid chain; its full sequence is ATP synthase subunit alpha (513 aa).

169-176 (GDRQTGKT) serves as a coordination point for ATP.

The protein belongs to the ATPase alpha/beta chains family. In terms of assembly, F-type ATPases have 2 components, CF(1) - the catalytic core - and CF(0) - the membrane proton channel. CF(1) has five subunits: alpha(3), beta(3), gamma(1), delta(1), epsilon(1). CF(0) has three main subunits: a(1), b(2) and c(9-12). The alpha and beta chains form an alternating ring which encloses part of the gamma chain. CF(1) is attached to CF(0) by a central stalk formed by the gamma and epsilon chains, while a peripheral stalk is formed by the delta and b chains.

It is found in the cell inner membrane. The enzyme catalyses ATP + H2O + 4 H(+)(in) = ADP + phosphate + 5 H(+)(out). Its function is as follows. Produces ATP from ADP in the presence of a proton gradient across the membrane. The alpha chain is a regulatory subunit. The protein is ATP synthase subunit alpha of Citrobacter koseri (strain ATCC BAA-895 / CDC 4225-83 / SGSC4696).